A 175-amino-acid polypeptide reads, in one-letter code: Adenine phosphoribosyltransferase (175 aa).

This sequence belongs to the purine/pyrimidine phosphoribosyltransferase family. In terms of assembly, homodimer.

Its subcellular location is the cytoplasm. The enzyme catalyses AMP + diphosphate = 5-phospho-alpha-D-ribose 1-diphosphate + adenine. It participates in purine metabolism; AMP biosynthesis via salvage pathway; AMP from adenine: step 1/1. Catalyzes a salvage reaction resulting in the formation of AMP, that is energically less costly than de novo synthesis. This chain is Adenine phosphoribosyltransferase, found in Lactobacillus johnsonii (strain CNCM I-12250 / La1 / NCC 533).